Here is a 205-residue protein sequence, read N- to C-terminus: Glycerol-3-phosphate acyltransferase (205 aa).

6 consecutive transmembrane segments (helical) span residues 8–28 (IALF…GYLA), 57–77 (TPAL…ILIA), 84–104 (ESLQ…PVWL), 118–138 (VFLG…LLIL), 143–163 (IVSL…LINS), and 164–184 (KETF…LVLW).

It belongs to the PlsY family. Probably interacts with PlsX.

Its subcellular location is the cell inner membrane. It carries out the reaction an acyl phosphate + sn-glycerol 3-phosphate = a 1-acyl-sn-glycero-3-phosphate + phosphate. The protein operates within lipid metabolism; phospholipid metabolism. Its function is as follows. Catalyzes the transfer of an acyl group from acyl-phosphate (acyl-PO(4)) to glycerol-3-phosphate (G3P) to form lysophosphatidic acid (LPA). This enzyme utilizes acyl-phosphate as fatty acyl donor, but not acyl-CoA or acyl-ACP. The protein is Glycerol-3-phosphate acyltransferase of Prochlorococcus marinus (strain SARG / CCMP1375 / SS120).